A 160-amino-acid chain; its full sequence is Ribosomal RNA large subunit methyltransferase H (160 aa).

Residues L76 and G108 each contribute to the S-adenosyl-L-methionine site.

This sequence belongs to the RNA methyltransferase RlmH family. Homodimer.

Its subcellular location is the cytoplasm. The catalysed reaction is pseudouridine(1915) in 23S rRNA + S-adenosyl-L-methionine = N(3)-methylpseudouridine(1915) in 23S rRNA + S-adenosyl-L-homocysteine + H(+). In terms of biological role, specifically methylates the pseudouridine at position 1915 (m3Psi1915) in 23S rRNA. This is Ribosomal RNA large subunit methyltransferase H from Afipia carboxidovorans (strain ATCC 49405 / DSM 1227 / KCTC 32145 / OM5) (Oligotropha carboxidovorans).